The primary structure comprises 256 residues: Pimeloyl-[acyl-carrier protein] methyl ester esterase (256 aa).

The AB hydrolase-1 domain occupies 15 to 242 (HLVLLHGWGL…AAHAPFISHP (228 aa)). Substrate-binding positions include Trp22, 82 to 83 (SL), and 143 to 147 (FLALQ). Ser82 serves as the catalytic Nucleophile. Residues Asp207 and His235 contribute to the active site. Position 235 (His235) interacts with substrate.

Belongs to the AB hydrolase superfamily. Carboxylesterase BioH family. In terms of assembly, monomer.

It is found in the cytoplasm. The enzyme catalyses 6-carboxyhexanoyl-[ACP] methyl ester + H2O = 6-carboxyhexanoyl-[ACP] + methanol + H(+). Its pathway is cofactor biosynthesis; biotin biosynthesis. The physiological role of BioH is to remove the methyl group introduced by BioC when the pimeloyl moiety is complete. It allows to synthesize pimeloyl-ACP via the fatty acid synthetic pathway through the hydrolysis of the ester bonds of pimeloyl-ACP esters. This is Pimeloyl-[acyl-carrier protein] methyl ester esterase from Escherichia coli O7:K1 (strain IAI39 / ExPEC).